Reading from the N-terminus, the 276-residue chain is Undecaprenyl-diphosphatase 1 (276 aa).

7 consecutive transmembrane segments (helical) span residues 4-24 (ILIC…FLPV), 45-62 (KTFD…VCWE), 83-103 (FTLN…LFEK), 108-128 (VLFS…IILW), 187-207 (VATE…TLYE), 217-237 (VDSL…AFVC), and 252-272 (VFAW…YSGW).

Belongs to the UppP family.

The protein resides in the cell inner membrane. The catalysed reaction is di-trans,octa-cis-undecaprenyl diphosphate + H2O = di-trans,octa-cis-undecaprenyl phosphate + phosphate + H(+). In terms of biological role, catalyzes the dephosphorylation of undecaprenyl diphosphate (UPP). Confers resistance to bacitracin. This chain is Undecaprenyl-diphosphatase 1, found in Burkholderia ambifaria (strain ATCC BAA-244 / DSM 16087 / CCUG 44356 / LMG 19182 / AMMD) (Burkholderia cepacia (strain AMMD)).